We begin with the raw amino-acid sequence, 469 residues long: Cysteine--tRNA ligase (469 aa).

C28 is a binding site for Zn(2+). Positions 30 to 40 (CTVYDLCHIGH) match the 'HIGH' region motif. Zn(2+) contacts are provided by C216, H241, and E245. The 'KMSKS' region motif lies at 273 to 277 (KMSKS). Residue K276 coordinates ATP.

The protein belongs to the class-I aminoacyl-tRNA synthetase family. As to quaternary structure, monomer. Zn(2+) is required as a cofactor.

The protein resides in the cytoplasm. It carries out the reaction tRNA(Cys) + L-cysteine + ATP = L-cysteinyl-tRNA(Cys) + AMP + diphosphate. This is Cysteine--tRNA ligase from Colwellia psychrerythraea (strain 34H / ATCC BAA-681) (Vibrio psychroerythus).